Reading from the N-terminus, the 166-residue chain is Transcriptional repressor NrdR (166 aa).

The segment at 3–34 (CIKCGNMEDKVIDSRPIKEGKSIRRRRECLRC) is a zinc-finger region. The region spanning 49-139 (LFVKKRNGSI…VYCKFHDAKD (91 aa)) is the ATP-cone domain.

This sequence belongs to the NrdR family. Zn(2+) is required as a cofactor.

Negatively regulates transcription of bacterial ribonucleotide reductase nrd genes and operons by binding to NrdR-boxes. The chain is Transcriptional repressor NrdR from Methylacidiphilum infernorum (isolate V4) (Methylokorus infernorum (strain V4)).